The following is an 86-amino-acid chain: Small ribosomal subunit protein bS16 (86 aa).

The protein belongs to the bacterial ribosomal protein bS16 family.

This is Small ribosomal subunit protein bS16 from Bordetella avium (strain 197N).